Reading from the N-terminus, the 264-residue chain is MAVGKNKRLTKGGKKGAKKKIVDPFSKKDWYDVKAPAMFNIRNLGKTLVTRTQGTKIASDGLKGRVFEVSLADLQNDEVAFRKFKLITEDVQGKNCLTNFHGMDLTRDKMCSMVKKWQTMIEAHVDVKTTDGYLLRLFCVGFTKKRNNQIRKTSYAQHQQVRQIRKKMFEIMTREVQTNDLKEVVNKLIPDSIGKDIEKACQSIYPLHDVYVRKVKMLKKPKFELGKLMELHGEGGGTGKPAGDETGAKVERADGYEPPVQESV.

Residues G233 to V264 form a disordered region. A compositionally biased stretch (basic and acidic residues) spans A242–G255.

It belongs to the eukaryotic ribosomal protein eS1 family. Component of the small ribosomal subunit. Mature ribosomes consist of a small (40S) and a large (60S) subunit. The 40S subunit contains about 33 different proteins and 1 molecule of RNA (18S). The 60S subunit contains about 49 different proteins and 3 molecules of RNA (28S, 5.8S and 5S). Part of the small subunit (SSU) processome, composed of more than 70 proteins and the RNA chaperone small nucleolar RNA (snoRNA) U3.

It localises to the cytoplasm. It is found in the nucleus. The protein localises to the nucleolus. Functionally, component of the small ribosomal subunit. The ribosome is a large ribonucleoprotein complex responsible for the synthesis of proteins in the cell. Part of the small subunit (SSU) processome, first precursor of the small eukaryotic ribosomal subunit. During the assembly of the SSU processome in the nucleolus, many ribosome biogenesis factors, an RNA chaperone and ribosomal proteins associate with the nascent pre-rRNA and work in concert to generate RNA folding, modifications, rearrangements and cleavage as well as targeted degradation of pre-ribosomal RNA by the RNA exosome. May play a role during erythropoiesis. This is Small ribosomal subunit protein eS1A (rps3a-a) from Xenopus laevis (African clawed frog).